A 242-amino-acid chain; its full sequence is ATP-dependent dethiobiotin synthetase BioD (242 aa).

12 to 17 provides a ligand contact to ATP; sequence SVGKTI. T16 contributes to the Mg(2+) binding site. Residue K37 is part of the active site. ATP is bound at residue D66. Mg(2+) is bound by residues D66 and E124. ATP is bound at residue 184–185; it reads NR.

Belongs to the dethiobiotin synthetase family. In terms of assembly, homodimer. Requires Mg(2+) as cofactor.

It localises to the cytoplasm. The catalysed reaction is (7R,8S)-7,8-diammoniononanoate + CO2 + ATP = (4R,5S)-dethiobiotin + ADP + phosphate + 3 H(+). It functions in the pathway cofactor biosynthesis; biotin biosynthesis; biotin from 7,8-diaminononanoate: step 1/2. Functionally, catalyzes a mechanistically unusual reaction, the ATP-dependent insertion of CO2 between the N7 and N8 nitrogen atoms of 7,8-diaminopelargonic acid (DAPA, also called 7,8-diammoniononanoate) to form a ureido ring. In Mannheimia succiniciproducens (strain KCTC 0769BP / MBEL55E), this protein is ATP-dependent dethiobiotin synthetase BioD.